A 403-amino-acid chain; its full sequence is Phosphoglycerate kinase (403 aa).

Substrate-binding positions include 24 to 26, Arg39, 62 to 65, Arg121, and Arg161; these read DLN and HLGR. ATP is bound by residues Lys211, Gly299, Glu330, and 359-362; that span reads GGDS.

The protein belongs to the phosphoglycerate kinase family. As to quaternary structure, monomer.

It localises to the cytoplasm. It catalyses the reaction (2R)-3-phosphoglycerate + ATP = (2R)-3-phospho-glyceroyl phosphate + ADP. The protein operates within carbohydrate degradation; glycolysis; pyruvate from D-glyceraldehyde 3-phosphate: step 2/5. The chain is Phosphoglycerate kinase from Corynebacterium kroppenstedtii (strain DSM 44385 / JCM 11950 / CIP 105744 / CCUG 35717).